We begin with the raw amino-acid sequence, 151 residues long: Flagellar assembly factor FliW (151 aa).

Belongs to the FliW family. As to quaternary structure, interacts with translational regulator CsrA and flagellin(s).

The protein localises to the cytoplasm. Functionally, acts as an anti-CsrA protein, binds CsrA and prevents it from repressing translation of its target genes, one of which is flagellin. Binds to flagellin and participates in the assembly of the flagellum. In Halalkalibacterium halodurans (strain ATCC BAA-125 / DSM 18197 / FERM 7344 / JCM 9153 / C-125) (Bacillus halodurans), this protein is Flagellar assembly factor FliW.